Reading from the N-terminus, the 306-residue chain is MKRCLRNGNGVNEDRISDLPEALLLQILSMLPVKDVVTTSVLSKPWRSLWKLVPTLKFDYENNQSEDETYSEIVCRLLLSNKAPFLESLHLGFRFGECRSVEVGMWIGIAYARHVRDLVLHVESVKGSFIFPTGLYNCETLESLTLRSWVLVDVPSPACLKSLRTLRLENVDYKYDDSVYNLLSGCPNLENLVVYRGNLLEVETFTIAVPSLQRLTIYDDNDGEYCTGYVINAPSLKYLKIDGFKALESCLIENAPELVEATIMNVSKIINEKLLETLTSVKRLSLALSPLELKFSCNNYSGHLLL.

In terms of domain architecture, F-box spans 13-73 (EDRISDLPEA…QSEDETYSEI (61 aa)). LRR repeat units lie at residues 67–93 (DETY…HLGF), 98–122 (CRSV…VLHV), 138–170 (CETL…RLEN), 171–196 (VDYK…VVYR), 215–243 (LTIY…KIDG), and 263–288 (IMNV…SLAL).

This Arabidopsis thaliana (Mouse-ear cress) protein is F-box/LRR-repeat protein At3g26922.